The sequence spans 373 residues: Zinc finger protein CONSTANS-LIKE 10 (373 aa).

Zn(2+) is bound by residues Cys5, Cys8, Cys28, His33, Cys48, Cys51, Cys71, and His76. Residues 5-47 form a B box-type 1; atypical zinc finger; sequence CDFCGEQRSMVYCRSDAACLCLSCDRNVHSANALSKRHSRTLV. Residues 48–92 form a B box-type 2; atypical zinc finger; sequence CERCNAQPASVRCSDERVSLCQNCDWSGHDGKNSTTTSHHKRQTI. The tract at residues 152–172 is disordered; sequence PETSSAAQGMDHSSVPENSSM. One can recognise a CCT domain in the interval 316–358; that stretch reads RNNAVMRYKEKKKARKFDKRVRYVSRKERADVRRRVKGRFVKS.

It belongs to the CONSTANS family.

The protein resides in the nucleus. The polypeptide is Zinc finger protein CONSTANS-LIKE 10 (COL10) (Arabidopsis thaliana (Mouse-ear cress)).